The following is a 315-amino-acid chain: DNA-directed RNA polymerase subunit alpha (315 aa).

Positions 1 to 228 are alpha N-terminal domain (alpha-NTD); the sequence is MLEIEKPKIE…EHLRLFIGLT (228 aa). Residues 245-315 are alpha C-terminal domain (alpha-CTD); sequence KDKILEMTIE…LGLGFRKADD (71 aa).

This sequence belongs to the RNA polymerase alpha chain family. As to quaternary structure, homodimer. The RNAP catalytic core consists of 2 alpha, 1 beta, 1 beta' and 1 omega subunit. When a sigma factor is associated with the core the holoenzyme is formed, which can initiate transcription.

The catalysed reaction is RNA(n) + a ribonucleoside 5'-triphosphate = RNA(n+1) + diphosphate. DNA-dependent RNA polymerase catalyzes the transcription of DNA into RNA using the four ribonucleoside triphosphates as substrates. The protein is DNA-directed RNA polymerase subunit alpha of Desulfitobacterium hafniense (strain DSM 10664 / DCB-2).